The primary structure comprises 482 residues: UDP-N-acetylmuramoyl-L-alanyl-D-glutamate--2,6-diaminopimelate ligase (482 aa).

2 residues coordinate UDP-N-acetyl-alpha-D-muramoyl-L-alanyl-D-glutamate: L28 and S30. 108–114 (GTNGKTT) serves as a coordination point for ATP. Residues 150–151 (TT), S177, Q183, and R185 each bind UDP-N-acetyl-alpha-D-muramoyl-L-alanyl-D-glutamate. N6-carboxylysine is present on K217. Meso-2,6-diaminopimelate contacts are provided by residues R372, 396-399 (DNPR), G447, and E451. The Meso-diaminopimelate recognition motif signature appears at 396–399 (DNPR).

Belongs to the MurCDEF family. MurE subfamily. The cofactor is Mg(2+). Carboxylation is probably crucial for Mg(2+) binding and, consequently, for the gamma-phosphate positioning of ATP.

The protein resides in the cytoplasm. It carries out the reaction UDP-N-acetyl-alpha-D-muramoyl-L-alanyl-D-glutamate + meso-2,6-diaminopimelate + ATP = UDP-N-acetyl-alpha-D-muramoyl-L-alanyl-gamma-D-glutamyl-meso-2,6-diaminopimelate + ADP + phosphate + H(+). The protein operates within cell wall biogenesis; peptidoglycan biosynthesis. Functionally, catalyzes the addition of meso-diaminopimelic acid to the nucleotide precursor UDP-N-acetylmuramoyl-L-alanyl-D-glutamate (UMAG) in the biosynthesis of bacterial cell-wall peptidoglycan. This chain is UDP-N-acetylmuramoyl-L-alanyl-D-glutamate--2,6-diaminopimelate ligase, found in Aquifex aeolicus (strain VF5).